Here is a 724-residue protein sequence, read N- to C-terminus: Long-chain-fatty-acid--CoA ligase ACSBG1 (724 aa).

The tract at residues 1–51 (MPRNSGAGYGCPHGDPSMLDSRETPQESRQDMTVGTTQEKLKTSSLTDRQP) is disordered. Over residues 20–30 (DSRETPQESRQ) the composition is skewed to basic and acidic residues. Polar residues predominate over residues 31-51 (DMTVGTTQEKLKTSSLTDRQP). Residues serine 53 and serine 56 each carry the phosphoserine modification. ATP-binding positions include 282–290 (TSGTTGNPK), 472–477 (AGYGLS), aspartate 550, and arginine 565. A Phosphotyrosine modification is found at tyrosine 658. Residue lysine 701 participates in ATP binding.

The protein belongs to the ATP-dependent AMP-binding enzyme family. Bubblegum subfamily.

Its subcellular location is the cytoplasm. The protein localises to the cytoplasmic vesicle. It is found in the microsome. The protein resides in the endoplasmic reticulum. It localises to the cell membrane. It carries out the reaction a long-chain fatty acid + ATP + CoA = a long-chain fatty acyl-CoA + AMP + diphosphate. The catalysed reaction is (E)-hexadec-2-enoate + ATP + CoA = (2E)-hexadecenoyl-CoA + AMP + diphosphate. The enzyme catalyses hexadecanoate + ATP + CoA = hexadecanoyl-CoA + AMP + diphosphate. Functionally, catalyzes the conversion of fatty acids such as long-chain and very long-chain fatty acids to their active form acyl-CoAs for both synthesis of cellular lipids, and degradation via beta-oxidation. Can activate diverse saturated, monosaturated and polyunsaturated fatty acids. The chain is Long-chain-fatty-acid--CoA ligase ACSBG1 from Macaca fascicularis (Crab-eating macaque).